A 201-amino-acid polypeptide reads, in one-letter code: Small ribosomal subunit protein uS4 (201 aa).

The interval 1-45 (MARYTGPLTKKSRRLGTDLVGNDKSFERRPYPPGVHGRGRTKDSE) is disordered. The S4 RNA-binding domain maps to 91 to 157 (SRLDNVVYRA…PPIVIARETF (67 aa)).

This sequence belongs to the universal ribosomal protein uS4 family. As to quaternary structure, part of the 30S ribosomal subunit. Contacts protein S5. The interaction surface between S4 and S5 is involved in control of translational fidelity.

Its function is as follows. One of the primary rRNA binding proteins, it binds directly to 16S rRNA where it nucleates assembly of the body of the 30S subunit. In terms of biological role, with S5 and S12 plays an important role in translational accuracy. This chain is Small ribosomal subunit protein uS4, found in Cutibacterium acnes (strain DSM 16379 / KPA171202) (Propionibacterium acnes).